A 1431-amino-acid polypeptide reads, in one-letter code: MGARASILRGGKLDAWERIKLKPGGKKHYMMKHLVWASRELERFALDPGLLETSEGCKQIMKQLQPALQTGTKELISLHNTVATLYCVHEKIDVRDTKEALDKIKEEQNKSQQKTQQAEAADKGKVSQNYPIVQNLQGQMVHQPISARTLNAWVKVVEEKAFSPEVIPMFTALSEGATPQDLNTMLNTVGGHQAAMQMLKDTINEEAAEWDRLHPVHAGPVAPGQMREPRGSDIAGTTSTLQEQITWMTNNPPVPVGDIYKRWIILGLNKIVRMYSPVSILDIKQGPKEPFRDYVDRFFKTLRAEQATQDVKNWMTDTLLVQNANPDCKTILRALGPGASLEEMMTACQGVGGPGHKARVLAEAMSKVNNTNIMMQRSNCKGPKRTIKCFNCGKEGHLARNCRAPRKKGCWKCGKEGHQVKDCTERQANFFRENLAFPQGEARKSSSEQNRANSPTRRELQVWGRDNNSLSEAGDDRQGTALNFPQITLWQRPLVNIKVGGQLKEALLDTGADDTVLEEIKLPGNWKPKMIGGIGGFIKVRQYDQILIEICGKKAIGTVLVGPTPVNIIGRNMLTQLGCTLNFPISPIETVPVKLKPGMDGPKVKQWLLTEEKIKALTAICDEMEREGKITKIGPENPYNTPVFAIKKKDSTKWRKLVDFRELNKRTWDFWEVQLGIPHPAGLKKKKSVTVLDVGDAYFSVPLDEGFRKYTAFTIPSINNETPGIRYQYNVLPQGWKGSPSIFQSSTTKILEPFRAQNPEIIIYQYMDDLYVGSDLEIGQHRAKIEELREHLLKWGFTTPDKKHQKEPPFLWMGYELHPDKWTVQPIQLPEKDSWTVNDIQKLVGKLNWASQIYPGIKVRQLCKLLRGAKALTDIVPLTEEAELELAENREILKEPVHGVYYDPSKDLIAEIQKQGQNQWTYQIYQEPFKNLKTGKYAKMRTAHTNDVRQLTEAVQKIALESIIIWGKTPKFRLPIQKETWEAWWTDYWQATWIPEWEFVNTPPLVKLWYQLEKEPIAGAETFYVDGAANREIKMGKAGYVTDRGRQKIVSITETTNQKTELQAIQLALQDSGSEVNIVTDSQYALGIIQAQPDKSESELVNQIIEQLIKKERVYLSWVPAHKGIGGNEQVDKLVSSGIRKVLFLDGINKAQEEHEKYHSNWRAMASEFNLPPIVAKEIVASCDKCQLKGEATHGQVDCSPGIWQLDCTHLEGKIILVAVHVASGYIEAEVIPAETGQETAYFILKLAGRWPVKVIHTDNGSNFISNTVKAACWWAGIQQEFGIPYNPQSQGVVESMNKELKKIIGQVRDQAEHLKTAVQMAVFIHNFKRKGGIGGYSAGERIIDIIATDIQTKELQKQIMKIQNFRVYYRDSRDPIWKGPAKLLWKGEGAVVLQDNSDIKVVPRRKVKIIKDYGKQMAGADCMASRQDED.

Residue Gly-2 is the site of N-myristoyl glycine; by host attachment. The interval 7–31 is interaction with Gp41; that stretch reads ILRGGKLDAWERIKLKPGGKKHYMM. The interval 8-43 is interaction with host CALM1; sequence LRGGKLDAWERIKLKPGGKKHYMMKHLVWASRELER. An interaction with host AP3D1 region spans residues 12-19; it reads KLDAWERI. Positions 14 to 33 are interaction with membrane phosphatidylinositol 4,5-bisphosphate and RNA; that stretch reads DAWERIKLKPGGKKHYMMKH. Positions 16-22 match the Nuclear export signal motif; it reads WERIKLK. Residues 26-32 carry the Nuclear localization signal motif; it reads KKHYMMK. The interaction with membrane phosphatidylinositol 4,5-bisphosphate stretch occupies residues 73 to 77; the sequence is KELIS. The segment at 106 to 126 is disordered; sequence EEQNKSQQKTQQAEAADKGKV. Tyr-130 is modified (phosphotyrosine; by host). The segment at 187–225 is interaction with human PPIA/CYPA and NUP153; sequence NTVGGHQAAMQMLKDTINEEAAEWDRLHPVHAGPVAPGQ. Residues 275 to 361 are dimerization/Multimerization of capsid protein p24; sequence YSPVSILDIK…GGPGHKARVL (87 aa). CCHC-type zinc fingers lie at residues 387-404 and 408-425; these read IKCF…NCRA and KGCW…DCTE. A disordered region spans residues 437 to 461; sequence FPQGEARKSSSEQNRANSPTRRELQ. Residues 485–489 form a dimerization of protease region; it reads PQITL. One can recognise a Peptidase A2 domain in the interval 504–573; that stretch reads KEALLDTGAD…TPVNIIGRNM (70 aa). Residue Asp-509 is the For protease activity; shared with dimeric partner of the active site. Dimerization of protease regions lie at residues 533–539 and 572–584; these read GIGGFIK and NMLT…LNFP. Residues 627–817 enclose the Reverse transcriptase domain; sequence EGKITKIGPE…PPFLWMGYEL (191 aa). Mg(2+) is bound by residues Asp-693, Asp-768, and Asp-769. The interval 810-818 is RT 'primer grip'; that stretch reads FLWMGYELH. A Tryptophan repeat motif motif is present at residues 981 to 997; sequence WEAWWTDYWQATWIPEW. Residues 1017 to 1140 form the RNase H type-1 domain; the sequence is IAGAETFYVD…VDKLVSSGIR (124 aa). 4 residues coordinate Mg(2+): Asp-1026, Glu-1061, Asp-1081, and Asp-1132. An Integrase-type zinc finger spans residues 1146-1187; it reads DGINKAQEEHEKYHSNWRAMASEFNLPPIVAKEIVASCDKCQ. Zn(2+) is bound by residues His-1155, His-1159, Cys-1183, and Cys-1186. Residues 1197–1347 form the Integrase catalytic domain; sequence VDCSPGIWQL…SAGERIIDII (151 aa). Mg(2+) is bound by residues Asp-1207, Asp-1259, and Glu-1295. A DNA-binding region (integrase-type) is located at residues 1366-1413; the sequence is FRVYYRDSRDPIWKGPAKLLWKGEGAVVLQDNSDIKVVPRRKVKIIKD.

As to quaternary structure, homotrimer; further assembles as hexamers of trimers. Interacts with gp41 (via C-terminus). Interacts with host CALM1; this interaction induces a conformational change in the Matrix protein, triggering exposure of the myristate group. Interacts with host AP3D1; this interaction allows the polyprotein trafficking to multivesicular bodies during virus assembly. Part of the pre-integration complex (PIC) which is composed of viral genome, matrix protein, Vpr and integrase. In terms of assembly, homodimer; the homodimer further multimerizes as homohexamers or homopentamers. Interacts with human PPIA/CYPA; This interaction stabilizes the capsid. Interacts with human NUP153. Interacts with host PDZD8; this interaction stabilizes the capsid. Interacts with monkey TRIM5; this interaction destabilizes the capsid. Homodimer, whose active site consists of two apposed aspartic acid residues. As to quaternary structure, heterodimer of p66 RT and p51 RT (RT p66/p51). Heterodimerization of RT is essential for DNA polymerase activity. The overall folding of the subdomains is similar in p66 RT and p51 RT but the spatial arrangements of the subdomains are dramatically different. In terms of assembly, homotetramer; may further associate as a homohexadecamer. Part of the pre-integration complex (PIC) which is composed of viral genome, matrix protein, Vpr and integrase. Interacts with human SMARCB1/INI1 and human PSIP1/LEDGF isoform 1. Interacts with human KPNA3; this interaction might play a role in nuclear import of the pre-integration complex. Interacts with human NUP153; this interaction might play a role in nuclear import of the pre-integration complex. Mg(2+) serves as cofactor. Specific enzymatic cleavages by the viral protease yield mature proteins. The protease is released by autocatalytic cleavage. The polyprotein is cleaved during and after budding, this process is termed maturation. Proteolytic cleavage of p66 RT removes the RNase H domain to yield the p51 RT subunit. Nucleocapsid protein p7 might be further cleaved after virus entry. Post-translationally, tyrosine phosphorylated presumably in the virion by a host kinase. Phosphorylation is apparently not a major regulator of membrane association. In terms of processing, phosphorylated possibly by host MAPK1; this phosphorylation is necessary for Pin1-mediated virion uncoating. Methylated by host PRMT6, impairing its function by reducing RNA annealing and the initiation of reverse transcription.

The protein resides in the host cell membrane. Its subcellular location is the host endosome. It localises to the host multivesicular body. The protein localises to the virion membrane. It is found in the host nucleus. The protein resides in the host cytoplasm. Its subcellular location is the virion. The catalysed reaction is Specific for a P1 residue that is hydrophobic, and P1' variable, but often Pro.. It catalyses the reaction Endohydrolysis of RNA in RNA/DNA hybrids. Three different cleavage modes: 1. sequence-specific internal cleavage of RNA. Human immunodeficiency virus type 1 and Moloney murine leukemia virus enzymes prefer to cleave the RNA strand one nucleotide away from the RNA-DNA junction. 2. RNA 5'-end directed cleavage 13-19 nucleotides from the RNA end. 3. DNA 3'-end directed cleavage 15-20 nucleotides away from the primer terminus.. It carries out the reaction 3'-end directed exonucleolytic cleavage of viral RNA-DNA hybrid.. The enzyme catalyses DNA(n) + a 2'-deoxyribonucleoside 5'-triphosphate = DNA(n+1) + diphosphate. Its activity is regulated as follows. Protease: The viral protease is inhibited by many synthetic protease inhibitors (PIs), such as amprenavir, atazanavir, indinavir, loprinavir, nelfinavir, ritonavir and saquinavir. Use of protease inhibitors in tritherapy regimens permit more ambitious therapeutic strategies. Reverse transcriptase/ribonuclease H: RT can be inhibited either by nucleoside RT inhibitors (NRTIs) or by non nucleoside RT inhibitors (NNRTIs). NRTIs act as chain terminators, whereas NNRTIs inhibit DNA polymerization by binding a small hydrophobic pocket near the RT active site and inducing an allosteric change in this region. Classical NRTIs are abacavir, adefovir (PMEA), didanosine (ddI), lamivudine (3TC), stavudine (d4T), tenofovir (PMPA), zalcitabine (ddC), and zidovudine (AZT). Classical NNRTIs are atevirdine (BHAP U-87201E), delavirdine, efavirenz (DMP-266), emivirine (I-EBU), and nevirapine (BI-RG-587). The tritherapies used as a basic effective treatment of AIDS associate two NRTIs and one NNRTI. Functionally, mediates, with Gag polyprotein, the essential events in virion assembly, including binding the plasma membrane, making the protein-protein interactions necessary to create spherical particles, recruiting the viral Env proteins, and packaging the genomic RNA via direct interactions with the RNA packaging sequence (Psi). Gag-Pol polyprotein may regulate its own translation, by the binding genomic RNA in the 5'-UTR. At low concentration, the polyprotein would promote translation, whereas at high concentration, the polyprotein would encapsidate genomic RNA and then shut off translation. Targets the polyprotein to the plasma membrane via a multipartite membrane-binding signal, that includes its myristoylated N-terminus. Matrix protein is part of the pre-integration complex. Implicated in the release from host cell mediated by Vpu. Binds to RNA. In terms of biological role, forms the conical core that encapsulates the genomic RNA-nucleocapsid complex in the virion. Most core are conical, with only 7% tubular. The core is constituted by capsid protein hexamer subunits. The core is disassembled soon after virion entry. Host restriction factors such as TRIM5-alpha or TRIMCyp bind retroviral capsids and cause premature capsid disassembly, leading to blocks in reverse transcription. Capsid restriction by TRIM5 is one of the factors which restricts HIV-1 to the human species. Host PIN1 apparently facilitates the virion uncoating. On the other hand, interactions with PDZD8 or CYPA stabilize the capsid. Its function is as follows. Encapsulates and protects viral dimeric unspliced genomic RNA (gRNA). Binds these RNAs through its zinc fingers. Acts as a nucleic acid chaperone which is involved in rearangement of nucleic acid secondary structure during gRNA retrotranscription. Also facilitates template switch leading to recombination. As part of the polyprotein, participates in gRNA dimerization, packaging, tRNA incorporation and virion assembly. Functionally, aspartyl protease that mediates proteolytic cleavages of Gag and Gag-Pol polyproteins during or shortly after the release of the virion from the plasma membrane. Cleavages take place as an ordered, step-wise cascade to yield mature proteins. This process is called maturation. Displays maximal activity during the budding process just prior to particle release from the cell. Also cleaves Nef and Vif, probably concomitantly with viral structural proteins on maturation of virus particles. Hydrolyzes host EIF4GI and PABP1 in order to shut off the capped cellular mRNA translation. The resulting inhibition of cellular protein synthesis serves to ensure maximal viral gene expression and to evade host immune response. Also mediates cleavage of host YTHDF3. Mediates cleavage of host CARD8, thereby activating the CARD8 inflammasome, leading to the clearance of latent HIV-1 in patient CD4(+) T-cells after viral reactivation; in contrast, HIV-1 can evade CARD8-sensing when its protease remains inactive in infected cells prior to viral budding. Multifunctional enzyme that converts the viral RNA genome into dsDNA in the cytoplasm, shortly after virus entry into the cell. This enzyme displays a DNA polymerase activity that can copy either DNA or RNA templates, and a ribonuclease H (RNase H) activity that cleaves the RNA strand of RNA-DNA heteroduplexes in a partially processive 3' to 5' endonucleasic mode. Conversion of viral genomic RNA into dsDNA requires many steps. A tRNA(3)-Lys binds to the primer-binding site (PBS) situated at the 5'-end of the viral RNA. RT uses the 3' end of the tRNA primer to perform a short round of RNA-dependent minus-strand DNA synthesis. The reading proceeds through the U5 region and ends after the repeated (R) region which is present at both ends of viral RNA. The portion of the RNA-DNA heteroduplex is digested by the RNase H, resulting in a ssDNA product attached to the tRNA primer. This ssDNA/tRNA hybridizes with the identical R region situated at the 3' end of viral RNA. This template exchange, known as minus-strand DNA strong stop transfer, can be either intra- or intermolecular. RT uses the 3' end of this newly synthesized short ssDNA to perform the RNA-dependent minus-strand DNA synthesis of the whole template. RNase H digests the RNA template except for two polypurine tracts (PPTs) situated at the 5'-end and near the center of the genome. It is not clear if both polymerase and RNase H activities are simultaneous. RNase H probably can proceed both in a polymerase-dependent (RNA cut into small fragments by the same RT performing DNA synthesis) and a polymerase-independent mode (cleavage of remaining RNA fragments by free RTs). Secondly, RT performs DNA-directed plus-strand DNA synthesis using the PPTs that have not been removed by RNase H as primers. PPTs and tRNA primers are then removed by RNase H. The 3' and 5' ssDNA PBS regions hybridize to form a circular dsDNA intermediate. Strand displacement synthesis by RT to the PBS and PPT ends produces a blunt ended, linear dsDNA copy of the viral genome that includes long terminal repeats (LTRs) at both ends. In terms of biological role, catalyzes viral DNA integration into the host chromosome, by performing a series of DNA cutting and joining reactions. This enzyme activity takes place after virion entry into a cell and reverse transcription of the RNA genome in dsDNA. The first step in the integration process is 3' processing. This step requires a complex comprising the viral genome, matrix protein, Vpr and integrase. This complex is called the pre-integration complex (PIC). The integrase protein removes 2 nucleotides from each 3' end of the viral DNA, leaving recessed CA OH's at the 3' ends. In the second step, the PIC enters cell nucleus. This process is mediated through integrase and Vpr proteins, and allows the virus to infect a non dividing cell. This ability to enter the nucleus is specific of lentiviruses, other retroviruses cannot and rely on cell division to access cell chromosomes. In the third step, termed strand transfer, the integrase protein joins the previously processed 3' ends to the 5' ends of strands of target cellular DNA at the site of integration. The 5'-ends are produced by integrase-catalyzed staggered cuts, 5 bp apart. A Y-shaped, gapped, recombination intermediate results, with the 5'-ends of the viral DNA strands and the 3' ends of target DNA strands remaining unjoined, flanking a gap of 5 bp. The last step is viral DNA integration into host chromosome. This involves host DNA repair synthesis in which the 5 bp gaps between the unjoined strands are filled in and then ligated. Since this process occurs at both cuts flanking the HIV genome, a 5 bp duplication of host DNA is produced at the ends of HIV-1 integration. Alternatively, Integrase may catalyze the excision of viral DNA just after strand transfer, this is termed disintegration. This Homo sapiens (Human) protein is Gag-Pol polyprotein (gag-pol).